The chain runs to 698 residues: Serotransferrin (698 aa).

Positions 1-19 are cleaved as a signal peptide; the sequence is MRLAVGALLVCAVLGLCLA. Transferrin-like domains lie at 25–347 and 361–683; these read VRWC…NLRE and VKWC…NLRK. 2 cysteine pairs are disulfide-bonded: Cys28–Cys67 and Cys38–Cys58. At Arg42 the chain carries Dimethylated arginine. An O-linked (GalNAc...) serine glycan is attached at Ser51. Fe(3+) contacts are provided by Asp82 and Tyr114. 17 cysteine pairs are disulfide-bonded: Cys137–Cys213, Cys156–Cys350, Cys177–Cys193, Cys180–Cys198, Cys190–Cys196, Cys246–Cys260, Cys358–Cys615, Cys364–Cys396, Cys374–Cys387, Cys421–Cys693, Cys437–Cys656, Cys469–Cys542, Cys493–Cys684, Cys503–Cys517, Cys514–Cys525, Cys582–Cys596, and Cys634–Cys639. Residues Thr139, Arg143, Ala145, and Gly146 each coordinate hydrogencarbonate. Fe(3+) is bound at residue Tyr207. Residue His268 participates in Fe(3+) binding. Ser389 bears the Phosphoserine; by FAM20C mark. Asp411 serves as a coordination point for Fe(3+). Asn432 is a glycosylation site (N-linked (GlcNAc...) (complex) asparagine). Tyr445 is a Fe(3+) binding site. Hydrogencarbonate-binding residues include Thr471, Arg475, Ala477, and Gly478. Asn491 is a glycosylation site (N-linked (GlcNAc...) asparagine; atypical; partial). Residue Tyr536 coordinates Fe(3+). His604 provides a ligand contact to Fe(3+). N-linked (GlcNAc...) (complex) asparagine glycosylation is present at Asn630. At Ser685 the chain carries Phosphoserine; by FAM20C.

It belongs to the transferrin family. As to quaternary structure, monomer. Part of a complex composed of SLC40A1/ferroportin, TF/transferrin and HEPH/hephaestin that transfers iron from cells to transferrin. In terms of assembly, (Microbial infection) Binds to Neisseria transferrin-binding protein A (tbpA or tbp1). Forms a large complex with TbpA and TbpB. (Microbial infection) Binds to Neisseria transferrin-binding protein B (tbpb or tbp2). In terms of tissue distribution, expressed by the liver and secreted in plasma.

Its subcellular location is the secreted. Functionally, transferrins are iron binding transport proteins which can bind two Fe(3+) ions in association with the binding of an anion, usually bicarbonate. It is responsible for the transport of iron from sites of absorption and heme degradation to those of storage and utilization. Serum transferrin may also have a further role in stimulating cell proliferation. In terms of biological role, (Microbial infection) Serves as an iron source for Neisseria species, which capture the protein and extract its iron for their own use. Its function is as follows. (Microbial infection) Serves as an iron source for parasite T.brucei (strain 427), which capture TF via its own transferrin receptor ESAG6:ESAG7 and extract its iron for its own use. The polypeptide is Serotransferrin (Homo sapiens (Human)).